The primary structure comprises 653 residues: Zinc finger protein 59 (653 aa).

The 73-residue stretch at 14–86 (VTFRDVAVDF…VNEETGRPSP (73 aa)) folds into the KRAB domain. 16 C2H2-type zinc fingers span residues 172–194 (YECKECGKCFGCRSTLTQHQSVH), 200–222 (YECKECGKAFRLPQQLTRHQKCH), 256–278 (FACRECGKSFNRVSSLVEHGLIH), 284–306 (YECNECGKAFKRHRSFVRHQKIH), 312–334 (FQCKDCGKGFIVLAHLTRHQSSH), 340–362 (FECEECGKKFRTARHLVKHQRIH), 368–390 (FECNVCGSAFRLQLYLSEHQKTH), 396–418 (LECNVCGKAFRLQVYLSEHLKTH), 424–446 (FKCKLCGSAFPNKYQLNKHLTVH), 452–474 (YQCKECGKCFRQRSKLTEHESIH), 480–502 (FQCEECGKFFRLNTLLIHHQKSH), 508–530 (FECKECGKAFLLPSQLNSHKIVH), 536–558 (FECKVCGKSFKRESNLIQHGAVH), 564–586 (YECSECGKGFIHRSSLFHHRKIH), 592–614 (FKCQECGKAFVVLAYLIQHQSIH), and 620–642 (FECELCGSAFRCRSQLNKHLRIH).

It belongs to the krueppel C2H2-type zinc-finger protein family. Expressed predominantly in the testis (at protein level).

The protein resides in the nucleus. Its function is as follows. May have a role during differentiation processes. The sequence is that of Zinc finger protein 59 (Zfp59) from Mus musculus (Mouse).